Here is a 91-residue protein sequence, read N- to C-terminus: Probable Fe(2+)-trafficking protein (91 aa).

This sequence belongs to the Fe(2+)-trafficking protein family. In terms of assembly, monomer.

Functionally, could be a mediator in iron transactions between iron acquisition and iron-requiring processes, such as synthesis and/or repair of Fe-S clusters in biosynthetic enzymes. The protein is Probable Fe(2+)-trafficking protein of Cronobacter sakazakii (strain ATCC BAA-894) (Enterobacter sakazakii).